The following is a 257-amino-acid chain: Deoxyribose-phosphate aldolase (257 aa).

The active-site Proton donor/acceptor is aspartate 102. Residue lysine 166 is the Schiff-base intermediate with acetaldehyde of the active site. Lysine 198 functions as the Proton donor/acceptor in the catalytic mechanism.

Belongs to the DeoC/FbaB aldolase family. DeoC type 2 subfamily.

Its subcellular location is the cytoplasm. It carries out the reaction 2-deoxy-D-ribose 5-phosphate = D-glyceraldehyde 3-phosphate + acetaldehyde. The protein operates within carbohydrate degradation; 2-deoxy-D-ribose 1-phosphate degradation; D-glyceraldehyde 3-phosphate and acetaldehyde from 2-deoxy-alpha-D-ribose 1-phosphate: step 2/2. Its function is as follows. Catalyzes a reversible aldol reaction between acetaldehyde and D-glyceraldehyde 3-phosphate to generate 2-deoxy-D-ribose 5-phosphate. The sequence is that of Deoxyribose-phosphate aldolase from Shewanella amazonensis (strain ATCC BAA-1098 / SB2B).